We begin with the raw amino-acid sequence, 397 residues long: Tryptophan synthase beta chain (397 aa).

Lys-87 carries the N6-(pyridoxal phosphate)lysine modification.

It belongs to the TrpB family. Tetramer of two alpha and two beta chains. Pyridoxal 5'-phosphate is required as a cofactor.

The catalysed reaction is (1S,2R)-1-C-(indol-3-yl)glycerol 3-phosphate + L-serine = D-glyceraldehyde 3-phosphate + L-tryptophan + H2O. It functions in the pathway amino-acid biosynthesis; L-tryptophan biosynthesis; L-tryptophan from chorismate: step 5/5. The beta subunit is responsible for the synthesis of L-tryptophan from indole and L-serine. This is Tryptophan synthase beta chain from Escherichia fergusonii (strain ATCC 35469 / DSM 13698 / CCUG 18766 / IAM 14443 / JCM 21226 / LMG 7866 / NBRC 102419 / NCTC 12128 / CDC 0568-73).